We begin with the raw amino-acid sequence, 298 residues long: Protease HtpX homolog (298 aa).

The next 2 membrane-spanning stretches (helical) occupy residues 16 to 36 (VMFGFGVLTLAIGAALGYLFW) and 38 to 58 (SWVSGTVIAAVVAVVYMLIMI). Residue H144 participates in Zn(2+) binding. Residue E145 is part of the active site. H148 lines the Zn(2+) pocket. Helical transmembrane passes span 159–179 (IALALSAAIGLLVNFASNWFW) and 197–217 (IIGLVISIFLIILAPLAASIA). E226 is a binding site for Zn(2+).

This sequence belongs to the peptidase M48B family. Zn(2+) is required as a cofactor.

It is found in the cell membrane. The chain is Protease HtpX homolog from Levilactobacillus brevis (strain ATCC 367 / BCRC 12310 / CIP 105137 / JCM 1170 / LMG 11437 / NCIMB 947 / NCTC 947) (Lactobacillus brevis).